Reading from the N-terminus, the 271-residue chain is Mannosyl-3-phosphoglycerate phosphatase (271 aa).

The active-site Nucleophile is the Asp13. Residues Asp13, Asp15, and Asp214 each contribute to the Mg(2+) site.

It belongs to the HAD-like hydrolase superfamily. MPGP family. It depends on Mg(2+) as a cofactor.

The protein localises to the cytoplasm. The enzyme catalyses 2-O-(alpha-D-mannosyl)-3-phosphoglycerate + H2O = (2R)-2-O-(alpha-D-mannosyl)-glycerate + phosphate. This Escherichia coli (strain SMS-3-5 / SECEC) protein is Mannosyl-3-phosphoglycerate phosphatase.